The chain runs to 150 residues: MIGLIQRVREARVEVDGVVVGRTGRGLLALIGVQRDDDEPQARRLLERILGYRVFPDEAGRMNRSVRDIGGGLLLVPQFTLAADTRKGMRASFAPAASPERGEALFHRLLGLARESGVPVEAGRFAADMQVHLINDGPVTFWLEARPSAA.

The Gly-cisPro motif, important for rejection of L-amino acids motif lies at 137–138; that stretch reads GP.

It belongs to the DTD family. Homodimer.

It is found in the cytoplasm. The enzyme catalyses glycyl-tRNA(Ala) + H2O = tRNA(Ala) + glycine + H(+). It carries out the reaction a D-aminoacyl-tRNA + H2O = a tRNA + a D-alpha-amino acid + H(+). An aminoacyl-tRNA editing enzyme that deacylates mischarged D-aminoacyl-tRNAs. Also deacylates mischarged glycyl-tRNA(Ala), protecting cells against glycine mischarging by AlaRS. Acts via tRNA-based rather than protein-based catalysis; rejects L-amino acids rather than detecting D-amino acids in the active site. By recycling D-aminoacyl-tRNA to D-amino acids and free tRNA molecules, this enzyme counteracts the toxicity associated with the formation of D-aminoacyl-tRNA entities in vivo and helps enforce protein L-homochirality. The protein is D-aminoacyl-tRNA deacylase of Alkalilimnicola ehrlichii (strain ATCC BAA-1101 / DSM 17681 / MLHE-1).